A 146-amino-acid polypeptide reads, in one-letter code: VEWTDFERATINDIFSKLEYEVVGPATLARCLVVYPWTQRYFGNFGNLYNAAAIAENPMVSKHGITILHGLDRAVKNMDDIKNTYAELSVLHSEKLHVDPDNFQLLADCLTIVVAARFGNTFTGEVQAAFQKFLSVVVSSLGRQYH.

One can recognise a Globin domain in the interval 2 to 146; sequence EWTDFERATI…VVSSLGRQYH (145 aa). Heme b is bound by residues His-63 and His-92.

This sequence belongs to the globin family. In terms of assembly, hb 2 is a heterotetramer of two alpha-2 and two beta-2 chains. As to expression, red blood cells.

Functionally, involved in oxygen transport from gills to the various peripheral tissues. In Gobionotothen gibberifrons (Humped rockcod), this protein is Hemoglobin subunit beta-2 (hbb2).